A 419-amino-acid chain; its full sequence is MSHPNTHMPRTHAVHGRAAPQRRGCRTSVEKTDQSGHSRSSLAESAMEQAQLRSRGEAGGGRSVLCASGEPGSAHKWAGAVTCSGAEEQPLHWAESRARGLARHLHYWELPYAWRENRYIIYGHRFYHSHRKSLLSVLNAYGWHNETINIWSHLVGAAVLAYLLCWGWPRSDVYRAAQVPRLAKWAIGAFLACGVKCMASSVAWHTFNGTCHLKLRSRFVCVDYTGITLLVTASVVTTVAVTLYGLSRPLMYAYMVASIGLGTAAGVMNWSPHFDRPEARPLRIAVYVGLAALGLVSFVHVWMQVRWASAHLMAPLVYKSLVWYGIGVVFYATLVPERWRSDVTLDCCSGPVHEAACRQFRDLPPVARKDRQFWSLWWVDYFCHSHFLWHVFVVLGVVGHYRAVLQMSRIVWLDAGRAF.

The segment at 1–65 (MSHPNTHMPR…GEAGGGRSVL (65 aa)) is disordered. Over 1–147 (MSHPNTHMPR…LNAYGWHNET (147 aa)) the chain is Lumenal. N-linked (GlcNAc...) asparagine glycosylation is present at Asn-145. Residues 148 to 168 (INIWSHLVGAAVLAYLLCWGW) form a helical membrane-spanning segment. The Cytoplasmic portion of the chain corresponds to 169–184 (PRSDVYRAAQVPRLAK). Residues 185 to 205 (WAIGAFLACGVKCMASSVAWH) traverse the membrane as a helical segment. Residues 206–225 (TFNGTCHLKLRSRFVCVDYT) are Lumenal-facing. Asn-208 is a glycosylation site (N-linked (GlcNAc...) asparagine). Residues 226–246 (GITLLVTASVVTTVAVTLYGL) form a helical membrane-spanning segment. Residues 247 to 249 (SRP) are Cytoplasmic-facing. The chain crosses the membrane as a helical span at residues 250 to 270 (LMYAYMVASIGLGTAAGVMNW). Residues 271–283 (SPHFDRPEARPLR) lie on the Lumenal side of the membrane. A helical membrane pass occupies residues 284–304 (IAVYVGLAALGLVSFVHVWMQ). Residues 305–311 (VRWASAH) lie on the Cytoplasmic side of the membrane. The chain crosses the membrane as a helical span at residues 312–332 (LMAPLVYKSLVWYGIGVVFYA). Residues 333–377 (TLVPERWRSDVTLDCCSGPVHEAACRQFRDLPPVARKDRQFWSLW) lie on the Lumenal side of the membrane. A helical membrane pass occupies residues 378–398 (WVDYFCHSHFLWHVFVVLGVV). The Cytoplasmic portion of the chain corresponds to 399–419 (GHYRAVLQMSRIVWLDAGRAF).

The protein belongs to the ADIPOR family.

The protein localises to the endoplasmic reticulum membrane. In terms of biological role, ADIPOR-like receptor involved in zinc metabolism either by altering membrane sterol content or by directly altering cellular zinc levels. This Eremothecium gossypii (strain ATCC 10895 / CBS 109.51 / FGSC 9923 / NRRL Y-1056) (Yeast) protein is ADIPOR-like receptor IZH3 (IZH3).